The sequence spans 421 residues: Enolase (421 aa).

Glutamine 161 is a binding site for (2R)-2-phosphoglycerate. Glutamate 203 acts as the Proton donor in catalysis. 3 residues coordinate Mg(2+): aspartate 240, glutamate 283, and aspartate 310. (2R)-2-phosphoglycerate contacts are provided by lysine 335, arginine 364, serine 365, and lysine 386. Lysine 335 functions as the Proton acceptor in the catalytic mechanism.

Belongs to the enolase family. Mg(2+) serves as cofactor.

It is found in the cytoplasm. The protein localises to the secreted. It localises to the cell surface. It carries out the reaction (2R)-2-phosphoglycerate = phosphoenolpyruvate + H2O. It functions in the pathway carbohydrate degradation; glycolysis; pyruvate from D-glyceraldehyde 3-phosphate: step 4/5. In terms of biological role, catalyzes the reversible conversion of 2-phosphoglycerate (2-PG) into phosphoenolpyruvate (PEP). It is essential for the degradation of carbohydrates via glycolysis. The protein is Enolase of Sulfurimonas denitrificans (strain ATCC 33889 / DSM 1251) (Thiomicrospira denitrificans (strain ATCC 33889 / DSM 1251)).